The chain runs to 1024 residues: Beta-galactosidase (1024 aa).

Asn-103 and Asp-202 together coordinate substrate. Asp-202 contributes to the Na(+) binding site. Positions 417, 419, and 462 each coordinate Mg(2+). Residues Glu-462 and 538 to 541 (EYAH) contribute to the substrate site. The Proton donor role is filled by Glu-462. Glu-538 (nucleophile) is an active-site residue. Asn-598 is a binding site for Mg(2+). Phe-602 and Asn-605 together coordinate Na(+). 2 residues coordinate substrate: Asn-605 and Trp-1000.

It belongs to the glycosyl hydrolase 2 family. Homotetramer. It depends on Mg(2+) as a cofactor. The cofactor is Na(+).

It catalyses the reaction Hydrolysis of terminal non-reducing beta-D-galactose residues in beta-D-galactosides.. The sequence is that of Beta-galactosidase from Escherichia coli (strain SMS-3-5 / SECEC).